A 351-amino-acid polypeptide reads, in one-letter code: Pentatricopeptide repeat-containing protein At3g56030, mitochondrial (351 aa).

The transit peptide at 1–41 directs the protein to the mitochondrion; it reads MFRLKPLISVDLNQTMSLLRRFVKEANNSRFLLQSISGRSF. PPR repeat units lie at residues 124-158, 159-193, 194-224, and 232-266; these read RKHSYETLIARLCKLGRIDDALVLINDMAIGEFGL, STCVFHPILNTLTKKNRIEEAWRVVELMRSHAIPV, DVTSYNYFLTSHCYDGDVAEASRVLRKMEEE, and DTRTYDALVLGACKSGRVEAAMAILRRMEEEGLSV.

It belongs to the PPR family. P subfamily.

The protein resides in the mitochondrion. The chain is Pentatricopeptide repeat-containing protein At3g56030, mitochondrial from Arabidopsis thaliana (Mouse-ear cress).